We begin with the raw amino-acid sequence, 602 residues long: Aspartate--tRNA(Asp/Asn) ligase (602 aa).

Residue Glu-176 participates in L-aspartate binding. An aspartate region spans residues 200–203; sequence QQFK. The L-aspartate site is built by Arg-222 and His-452. Residue 222–224 coordinates ATP; that stretch reads RDE. Glu-490 serves as a coordination point for ATP. Arg-497 is a binding site for L-aspartate. Residue 542-545 participates in ATP binding; it reads GIDR.

Belongs to the class-II aminoacyl-tRNA synthetase family. Type 1 subfamily. Homodimer.

The protein localises to the cytoplasm. The enzyme catalyses tRNA(Asx) + L-aspartate + ATP = L-aspartyl-tRNA(Asx) + AMP + diphosphate. Functionally, aspartyl-tRNA synthetase with relaxed tRNA specificity since it is able to aspartylate not only its cognate tRNA(Asp) but also tRNA(Asn). Reaction proceeds in two steps: L-aspartate is first activated by ATP to form Asp-AMP and then transferred to the acceptor end of tRNA(Asp/Asn). The sequence is that of Aspartate--tRNA(Asp/Asn) ligase from Rickettsia canadensis (strain McKiel).